A 590-amino-acid chain; its full sequence is Protein I'm not dead yet (590 aa).

The next 11 helical transmembrane spans lie at Gly43 to Ala63, Ala82 to Met102, Thr115 to His135, Leu153 to Cys173, Leu224 to Gly244, Thr270 to Leu290, Leu329 to Met349, Ser373 to Leu393, Val457 to Phe477, Ala509 to Val529, and Met540 to Gln560.

It belongs to the SLC13A/DASS transporter (TC 2.A.47) family. NADC subfamily. In terms of tissue distribution, in adults, abundantly expressed in the fat body, basolateral region of midgut cells and oenocytes. Low level expression is seen in the halteres, procardia, restricted regions of the esophagus and hindgut, base of the legs and in a subset of cells in the third segment of the antennae.

It is found in the basolateral cell membrane. Its function is as follows. Cation-independent electroneutral transporter (not associated with membrane depolarization) of a variety of tricarboxylic and dicarboxylic acid-cycle intermediates. There is also small, but detectable, transport of monocarboxylics. Transport is through the epithelium of the gut and across the plasma membranes of organs involved in intermediary metabolism and storage. Affinity for substrates is citrate &gt; succinate &gt; pyruvate. Fumarate, a-ketoglutarate, and glutarate are also transported, but not lactate. Transport mechanism that is not coupled to Na(+), K(+), or Cl(-). Function is shown in Xenopus oocytes and human retinal pigment epithelial (HRPE) cell lines. This chain is Protein I'm not dead yet (Indy), found in Drosophila melanogaster (Fruit fly).